The following is a 546-amino-acid chain: CTP synthase (546 aa).

Positions 1–266 (MTTRYIFVTG…DQLVTKRFGI (266 aa)) are amidoligase domain. A CTP-binding site is contributed by Ser14. Ser14 serves as a coordination point for UTP. Residues 15 to 20 (SLGKGI) and Asp72 each bind ATP. Mg(2+) contacts are provided by Asp72 and Glu140. Residues 147–149 (DIE), 187–192 (KTKPTQ), and Lys223 contribute to the CTP site. Residues 187-192 (KTKPTQ) and Lys223 contribute to the UTP site. 239 to 241 (KDV) serves as a coordination point for ATP. In terms of domain architecture, Glutamine amidotransferase type-1 spans 291-542 (TIGMVGKYIE…VAAAAAYQKR (252 aa)). Residue Gly352 coordinates L-glutamine. Cys379 (nucleophile; for glutamine hydrolysis) is an active-site residue. L-glutamine is bound by residues 380-383 (LGMQ), Glu403, and Arg470. Catalysis depends on residues His515 and Glu517.

This sequence belongs to the CTP synthase family. Homotetramer.

It catalyses the reaction UTP + L-glutamine + ATP + H2O = CTP + L-glutamate + ADP + phosphate + 2 H(+). It carries out the reaction L-glutamine + H2O = L-glutamate + NH4(+). The enzyme catalyses UTP + NH4(+) + ATP = CTP + ADP + phosphate + 2 H(+). Its pathway is pyrimidine metabolism; CTP biosynthesis via de novo pathway; CTP from UDP: step 2/2. Its activity is regulated as follows. Allosterically activated by GTP, when glutamine is the substrate; GTP has no effect on the reaction when ammonia is the substrate. The allosteric effector GTP functions by stabilizing the protein conformation that binds the tetrahedral intermediate(s) formed during glutamine hydrolysis. Inhibited by the product CTP, via allosteric rather than competitive inhibition. In terms of biological role, catalyzes the ATP-dependent amination of UTP to CTP with either L-glutamine or ammonia as the source of nitrogen. Regulates intracellular CTP levels through interactions with the four ribonucleotide triphosphates. The sequence is that of CTP synthase from Shewanella pealeana (strain ATCC 700345 / ANG-SQ1).